The following is a 187-amino-acid chain: Superoxide dismutase [Cu-Zn] (187 aa).

Residues 1 to 21 (MSLLPTGTLILLVLFILVLIT) form the signal peptide. Cu cation contacts are provided by His76, His78, and His93. A disulfide bridge links Cys87 with Cys176. Zn(2+) contacts are provided by His93, His101, His110, and Asp113. A Cu cation-binding site is contributed by His150.

This sequence belongs to the Cu-Zn superoxide dismutase family. The cofactor is Cu cation. Zn(2+) is required as a cofactor.

The catalysed reaction is 2 superoxide + 2 H(+) = H2O2 + O2. In terms of biological role, destroys radicals which are normally produced within the cells and which are toxic to biological systems. This chain is Superoxide dismutase [Cu-Zn], found in Chlorella (PBCV-1).